The chain runs to 155 residues: Small ribosomal subunit protein bS6 (155 aa).

Residues valine 94–serine 155 are disordered. The segment covering proline 103–glutamine 112 has biased composition (polar residues). Residues alanine 113–threonine 141 are compositionally biased toward basic and acidic residues.

This sequence belongs to the bacterial ribosomal protein bS6 family.

In terms of biological role, binds together with bS18 to 16S ribosomal RNA. The polypeptide is Small ribosomal subunit protein bS6 (Prochlorococcus marinus (strain MIT 9515)).